The chain runs to 477 residues: Glutamate--tRNA ligase (477 aa).

The short motif at 18–28 is the 'HIGH' region element; it reads PSPTGFIHLGN. Basic and acidic residues predominate over residues 128 to 138; sequence PRYDGSWRPEP. The tract at residues 128 to 151 is disordered; it reads PRYDGSWRPEPGKTLPPVPAGMSP. Positions 250 to 254 match the 'KMSKS' region motif; that stretch reads KLSKR. Lys-253 contacts ATP.

Belongs to the class-I aminoacyl-tRNA synthetase family. Glutamate--tRNA ligase type 1 subfamily. Monomer.

The protein localises to the cytoplasm. The enzyme catalyses tRNA(Glu) + L-glutamate + ATP = L-glutamyl-tRNA(Glu) + AMP + diphosphate. Catalyzes the attachment of glutamate to tRNA(Glu) in a two-step reaction: glutamate is first activated by ATP to form Glu-AMP and then transferred to the acceptor end of tRNA(Glu). The sequence is that of Glutamate--tRNA ligase from Verminephrobacter eiseniae (strain EF01-2).